The chain runs to 154 residues: 6,7-dimethyl-8-ribityllumazine synthase (154 aa).

Residues phenylalanine 15, 47–49 (TFD), and 71–73 (AVI) each bind 5-amino-6-(D-ribitylamino)uracil. 76–77 (ET) provides a ligand contact to (2S)-2-hydroxy-3-oxobutyl phosphate. Histidine 79 functions as the Proton donor in the catalytic mechanism. Leucine 104 provides a ligand contact to 5-amino-6-(D-ribitylamino)uracil. Arginine 119 is a (2S)-2-hydroxy-3-oxobutyl phosphate binding site.

This sequence belongs to the DMRL synthase family.

The catalysed reaction is (2S)-2-hydroxy-3-oxobutyl phosphate + 5-amino-6-(D-ribitylamino)uracil = 6,7-dimethyl-8-(1-D-ribityl)lumazine + phosphate + 2 H2O + H(+). Its pathway is cofactor biosynthesis; riboflavin biosynthesis; riboflavin from 2-hydroxy-3-oxobutyl phosphate and 5-amino-6-(D-ribitylamino)uracil: step 1/2. Its function is as follows. Catalyzes the formation of 6,7-dimethyl-8-ribityllumazine by condensation of 5-amino-6-(D-ribitylamino)uracil with 3,4-dihydroxy-2-butanone 4-phosphate. This is the penultimate step in the biosynthesis of riboflavin. This Saccharolobus islandicus (strain M.16.27) (Sulfolobus islandicus) protein is 6,7-dimethyl-8-ribityllumazine synthase.